The chain runs to 842 residues: Circularly permutated Ras protein 1 (842 aa).

GTP is bound by residues 62–66 (DTAGQ), 121–124 (NKVD), and 181–188 (GGGGVGKS). A disordered region spans residues 253–274 (SGKDKQPSPQQAASPSTIDRTG). A compositionally biased stretch (polar residues) spans 259–274 (PSPQQAASPSTIDRTG). Residues 377 to 627 (IIIYCIDVSG…TQNPMIATDV (251 aa)) enclose the VWFA domain.

It belongs to the small GTPase superfamily. CpRas family.

This Dictyostelium discoideum (Social amoeba) protein is Circularly permutated Ras protein 1 (cpras1).